The chain runs to 262 residues: Putative hydro-lyase Sca_2211 (262 aa).

Belongs to the D-glutamate cyclase family.

The protein is Putative hydro-lyase Sca_2211 of Staphylococcus carnosus (strain TM300).